The primary structure comprises 868 residues: DNA mismatch repair protein MutS (868 aa).

620–627 is an ATP binding site; sequence GPNMGGKS.

This sequence belongs to the DNA mismatch repair MutS family.

Its function is as follows. This protein is involved in the repair of mismatches in DNA. It is possible that it carries out the mismatch recognition step. This protein has a weak ATPase activity. The protein is DNA mismatch repair protein MutS of Desulforamulus reducens (strain ATCC BAA-1160 / DSM 100696 / MI-1) (Desulfotomaculum reducens).